Here is a 213-residue protein sequence, read N- to C-terminus: Large ribosomal subunit protein uL1 (213 aa).

Belongs to the universal ribosomal protein uL1 family. As to quaternary structure, part of the 50S ribosomal subunit.

Its function is as follows. Binds directly to 23S rRNA. Probably involved in E site tRNA release. Protein L1 is also a translational repressor protein, it controls the translation of its operon by binding to its mRNA. The protein is Large ribosomal subunit protein uL1 of Picrophilus torridus (strain ATCC 700027 / DSM 9790 / JCM 10055 / NBRC 100828 / KAW 2/3).